We begin with the raw amino-acid sequence, 352 residues long: DNA integrity scanning protein DisA (352 aa).

A DAC domain is found at 3-143 (DERIVLALKS…FKYSLSEVSV (141 aa)). ATP is bound by residues Gly70, Leu88, and 101 to 105 (IRHRT).

This sequence belongs to the DisA family. Homooctamer. The cofactor is Mg(2+).

The catalysed reaction is 2 ATP = 3',3'-c-di-AMP + 2 diphosphate. Its function is as follows. Participates in a DNA-damage check-point that is active prior to asymmetric division when DNA is damaged. DisA forms globular foci that rapidly scan along the chromosomes during sporulation, searching for lesions. When a lesion is present, DisA pauses at the lesion site. This triggers a cellular response that culminates in a temporary block in sporulation initiation. In terms of biological role, also has diadenylate cyclase activity, catalyzing the condensation of 2 ATP molecules into cyclic di-AMP (c-di-AMP). c-di-AMP acts as a signaling molecule that couples DNA integrity with progression of sporulation. The rise in c-di-AMP level generated by DisA while scanning the chromosome, operates as a positive signal that advances sporulation; upon encountering a lesion, the DisA focus arrests at the damaged site and halts c-di-AMP synthesis. This Carboxydothermus hydrogenoformans (strain ATCC BAA-161 / DSM 6008 / Z-2901) protein is DNA integrity scanning protein DisA.